A 547-amino-acid polypeptide reads, in one-letter code: Apicoplast pyruvate carrier 1 (547 aa).

The tract at residues 1 to 33 (MEPRAPPRLSVSSPRRESGATVPSHSPSTLLSC) is disordered. Over 1 to 45 (MEPRAPPRLSVSSPRRESGATVPSHSPSTLLSCASSETATEKRRR) the chain is Cytoplasmic. Over residues 21–33 (TVPSHSPSTLLSC) the composition is skewed to polar residues. A run of 12 helical transmembrane segments spans residues 46–66 (WTGV…GTVY), 126–146 (AWVL…GGIA), 167–187 (VGMA…FGVI), 189–209 (GVGL…WFPE), 212–232 (GIVS…FSPL), 278–298 (LLAV…RVPA), 345–365 (ALVS…GLAI), 385–405 (ILTE…NAVG), 417–437 (GFQT…FFLP), 445–465 (LCYA…FSVF), 467–487 (SAVA…FIFG), and 515–535 (LMGL…ALSP).

Belongs to the major facilitator superfamily. Interacts with apicoplast pyruvate carrier 2.

The protein localises to the plastid. It is found in the apicoplast. The protein resides in the membrane. In terms of biological role, along with apicoplast pyruvate carrier 2, forms apicoplast pyruvate carrier (APC) complex, which transports pyruvate into the apicoplast and may also transport amino acids like methionine, serine, glycine and tryptophan with low efficiency. Required for maintaining pyruvate-dependent metabolic activities in the apicoplast, such as synthesis of fatty acids, isopentenyl pyrophosphate (IPP), dimethylallyl pyrophosphate (DMAPP) and methylerythritol 4-phosphate (MEP). Required for maintaining the integrity of the apicoplast. Required for normal parasite growth. In Toxoplasma gondii, this protein is Apicoplast pyruvate carrier 1.